Here is an 84-residue protein sequence, read N- to C-terminus: Acyl carrier protein (84 aa).

The Carrier domain occupies 4–79 (NEIFEKVQDI…EVVDFIKSKL (76 aa)). Residue Ser39 is modified to O-(pantetheine 4'-phosphoryl)serine.

It belongs to the acyl carrier protein (ACP) family. In terms of processing, 4'-phosphopantetheine is transferred from CoA to a specific serine of apo-ACP by AcpS. This modification is essential for activity because fatty acids are bound in thioester linkage to the sulfhydryl of the prosthetic group.

It is found in the plastid. The protein resides in the chloroplast. It participates in lipid metabolism; fatty acid biosynthesis. Its function is as follows. Carrier of the growing fatty acid chain in fatty acid biosynthesis. In Porphyra purpurea (Red seaweed), this protein is Acyl carrier protein.